The sequence spans 375 residues: o-succinylbenzoate synthase (375 aa).

Lys166 acts as the Proton donor in catalysis. Residues Asp191, Glu216, and Asp241 each coordinate Mg(2+). Lys265 (proton acceptor) is an active-site residue.

The protein belongs to the mandelate racemase/muconate lactonizing enzyme family. MenC type 2 subfamily. In terms of assembly, homotetramer. It depends on a divalent metal cation as a cofactor.

The enzyme catalyses (1R,6R)-6-hydroxy-2-succinyl-cyclohexa-2,4-diene-1-carboxylate = 2-succinylbenzoate + H2O. The catalysed reaction is N-acetyl-D-methionine = N-acetyl-L-methionine. Its pathway is quinol/quinone metabolism; 1,4-dihydroxy-2-naphthoate biosynthesis; 1,4-dihydroxy-2-naphthoate from chorismate: step 4/7. It participates in quinol/quinone metabolism; menaquinone biosynthesis. Functionally, converts 2-succinyl-6-hydroxy-2,4-cyclohexadiene-1-carboxylate (SHCHC) to 2-succinylbenzoate (OSB). Also acts as a N-succinylamino acid racemase (NSAR) that catalyzes the racemization of N-succinyl-D/L-phenylalanine. Can catalyze the racemization of a broad range of N-acylamino acids, including N-acetyl-D-methionine, N-formyl-D/L-methionine, N-formyl-D/L-norleucine, N-formyl-D/L-aminobutyric acid, N-formyl-D/L-norvaline, N-formyl-D/L-homophenylalanine, N-carbamoyl-D-methionine and N-carbamoyl-D-norleucine. May be a bifunctional enzyme involved in menaquinone biosynthesis and in an irreversible pathway for the conversion of D- to L-amino acids, thereby facilitating the survival and/or growth of the organism. The chain is o-succinylbenzoate synthase from Geobacillus stearothermophilus (Bacillus stearothermophilus).